The primary structure comprises 400 residues: Ribosomal RNA large subunit methyltransferase I (400 aa).

The region spanning 6–84 (FPRLVLAKGR…NEAIDSAFFE (79 aa)) is the PUA domain.

Belongs to the methyltransferase superfamily. RlmI family.

The protein localises to the cytoplasm. The enzyme catalyses cytidine(1962) in 23S rRNA + S-adenosyl-L-methionine = 5-methylcytidine(1962) in 23S rRNA + S-adenosyl-L-homocysteine + H(+). Functionally, specifically methylates the cytosine at position 1962 (m5C1962) of 23S rRNA. The chain is Ribosomal RNA large subunit methyltransferase I from Klebsiella pneumoniae (strain 342).